Consider the following 863-residue polypeptide: Potassium/sodium hyperpolarization-activated cyclic nucleotide-gated channel 2 (863 aa).

The segment covering Met1–Pro10 has biased composition (gly residues). Positions Met1 to Ser131 are disordered. Over Met1–Asp188 the chain is Cytoplasmic. The span at Thr17–Pro47 shows a compositional bias: pro residues. Low complexity predominate over residues Gly106 to Pro128. Residues Ser119 and Ser134 each carry the phosphoserine modification. Residues Ser131–Asp182 form an involved in subunit assembly region. A helical membrane pass occupies residues Phe189 to Phe209. Over Lys210–Thr213 the chain is Extracellular. The chain crosses the membrane as a helical span at residues Thr214–Leu234. At Asn235–Arg261 the chain is on the cytoplasmic side. Residues Thr262–Glu282 traverse the membrane as a helical segment. At Lys283–Tyr290 the chain is on the extracellular side. Residues Lys291–Leu311 form a helical; Voltage-sensor membrane-spanning segment. The Cytoplasmic segment spans residues Arg312–Asn342. The helical transmembrane segment at Leu343–Met363 threads the bilayer. Residues Leu364–Leu386 are Extracellular-facing. A glycan (N-linked (GlcNAc...) asparagine) is linked at Asn380. Positions Tyr387–Pro408 form an intramembrane region, pore-forming. The Extracellular segment spans residues Glu409–Asp413. The helical transmembrane segment at Ile414–His434 threads the bilayer. At Ala435–Leu863 the chain is on the cytoplasmic side. The 3',5'-cyclic AMP site is built by Gly581, Glu582, Cys584, Arg591, Thr592, and Arg632. Ser641 carries the phosphoserine; by PKG/PRKG2 modification. Ser726 bears the Phosphoserine mark. Arg728 bears the Omega-N-methylarginine mark. The disordered stretch occupies residues Val730 to Leu863. Residues Pro734–Pro755 show a composition bias toward pro residues. Phosphoserine occurs at positions 743, 750, and 757. Low complexity-rich tracts occupy residues Ser756–Pro765, Pro778–Pro800, and Pro808–Ser834. Residues Ser840, Ser842, and Ser847 each carry the phosphoserine modification.

This sequence belongs to the potassium channel HCN family. In terms of assembly, homotetramer. The channel is composed of a homo- or heterotetrameric complex of pore-forming subunits. Heterotetramer with HCN1. Forms an obligate 4:4 complex with accessory subunit PEX5L; regulates HCN2 cell-surface expression and cyclic nucleotide dependence. Interacts with KCNE2. Post-translationally, S-palmitoylated. N-glycosylated; required for cell surface trafficking of HCN2. In terms of processing, phosphorylation at Ser-641 by PRKG2 shifts the voltage-dependence to more negative voltages, hence counteracting the stimulatory effect of cGMP on gating. In terms of tissue distribution, highly expressed in brain. Detected at low levels in heart, in ventricle, atrium and in sinoatrial node (SAN).

Its subcellular location is the cell membrane. It catalyses the reaction Na(+)(in) = Na(+)(out). The catalysed reaction is K(+)(in) = K(+)(out). It carries out the reaction NH4(+)(in) = NH4(+)(out). With respect to regulation, activated by cAMP, and at 10-100 times higher concentrations, also by cGMP. cAMP binding causes a conformation change that leads to the assembly of an active tetramer and channel opening. In the absence of cAMP, the C-terminal region is thought to exert a tonic inhibition on the pore when HCN2 is in a non-tetrameric form. Channel activity is modulated by intracellular chloride ions and pH; acidic pH shifts the activation to more negative voltages. Phosphatidylinositol-4,5- bisphosphate (PIP(2)) acts as a ligand that allosterically opens HCN2 by shifting voltage-dependent channel activation toward depolarized potentials. Inhibited by extracellular cesium ions. In terms of biological role, hyperpolarization-activated ion channel exhibiting weak selectivity for potassium over sodium ions. Contributes to the native pacemaker currents in heart (If) and in neurons (Ih). Can also transport ammonium in the distal nephron. Involved in the initiation of neuropathic pain in sensory neurons. The sequence is that of Potassium/sodium hyperpolarization-activated cyclic nucleotide-gated channel 2 from Mus musculus (Mouse).